The sequence spans 412 residues: DnaJ homolog subfamily A member 2 (412 aa).

The J domain occupies 8–70; it reads KLYDILGVPP…EKRELYDRYG (63 aa). K39 carries the post-translational modification N6-acetyllysine. S78 and S123 each carry phosphoserine. The segment at 130-214 adopts a CR-type zinc-finger fold; it reads GKTTKLQLSK…CEGKKVIKEV (85 aa). K134 participates in a covalent cross-link: Glycyl lysine isopeptide (Lys-Gly) (interchain with G-Cter in SUMO2). Positions 143 and 146 each coordinate Zn(2+). The CXXCXGXG motif repeat unit spans residues 143-150; that stretch reads CSACSGQG. An N6-acetyllysine modification is found at K152. Zn(2+) contacts are provided by C159, C162, C186, C189, C202, and C205. CXXCXGXG motif repeat units follow at residues 159–166, 186–193, and 202–209; these read CSACRGRG, CSDCNGEG, and CKKCEGKK. Residues 365 to 412 are disordered; it reads IGETEEVELQEFDSTRGSGGGQRREAYNDSSDEESSSHHGPGVQCAHQ. A Phosphotyrosine modification is found at Y391. Phosphoserine occurs at positions 394 and 395. The residue at position 409 (C409) is a Cysteine methyl ester. C409 carries the S-farnesyl cysteine lipid modification. Residues 410–412 constitute a propeptide, removed in mature form; sequence AHQ.

The protein resides in the membrane. Functionally, co-chaperone of Hsc70. Stimulates ATP hydrolysis and the folding of unfolded proteins mediated by HSPA1A/B (in vitro). The chain is DnaJ homolog subfamily A member 2 (Dnaja2) from Rattus norvegicus (Rat).